The following is a 635-amino-acid chain: Threonine--tRNA ligase (635 aa).

The TGS domain maps to 1 to 61 (MVSIRLPDGS…DRDASLAIVT (61 aa)). Positions 242–533 (DHRKLGKQLD…LIEHHAGAMP (292 aa)) are catalytic. Cysteine 333, histidine 384, and histidine 510 together coordinate Zn(2+).

This sequence belongs to the class-II aminoacyl-tRNA synthetase family. In terms of assembly, homodimer. It depends on Zn(2+) as a cofactor.

It is found in the cytoplasm. It catalyses the reaction tRNA(Thr) + L-threonine + ATP = L-threonyl-tRNA(Thr) + AMP + diphosphate + H(+). Catalyzes the attachment of threonine to tRNA(Thr) in a two-step reaction: L-threonine is first activated by ATP to form Thr-AMP and then transferred to the acceptor end of tRNA(Thr). Also edits incorrectly charged L-seryl-tRNA(Thr). The protein is Threonine--tRNA ligase of Burkholderia pseudomallei (strain 1106a).